Here is a 405-residue protein sequence, read N- to C-terminus: Cytochrome P450 130 (405 aa).

Substrate contacts are provided by D93 and H97. 7 residues coordinate heme: R101, G243, R295, Y318, S348, H352, and C354.

This sequence belongs to the cytochrome P450 family. In terms of assembly, homodimer. It depends on heme as a cofactor.

This is Cytochrome P450 130 (cyp130) from Mycobacterium tuberculosis (strain CDC 1551 / Oshkosh).